We begin with the raw amino-acid sequence, 2193 residues long: Genome polyprotein (2193 aa).

A lipid anchor (N-myristoyl glycine; by host) is attached at glycine 2. Residues glycine 2–glutamine 1503 are Cytoplasmic-facing. Residues glutamine 565 to valine 582 are amphipathic alpha-helix. Catalysis depends on for protease 2A activity residues histidine 880 and aspartate 898. Zn(2+) is bound by residues cysteine 915 and cysteine 917. The active-site For protease 2A activity is the cysteine 969. Cysteine 975 and histidine 977 together coordinate Zn(2+). The membrane-binding stretch occupies residues serine 1109–glutamine 1181. Residues serine 1109 to threonine 1247 are oligomerization. Positions alanine 1130 to glutamine 1134 are RNA-binding. In terms of domain architecture, SF3 helicase spans glutamate 1213–asparagine 1369. Zn(2+)-binding residues include cysteine 1377, cysteine 1389, and cysteine 1394. The segment at cysteine 1377 to cysteine 1394 adopts a C4-type; degenerate zinc-finger fold. The segment at glutamate 1421–valine 1428 is RNA-binding. Positions leucine 1432–glutamine 1437 are oligomerization. The stretch at alanine 1504–tyrosine 1519 is an intramembrane region. Residues lysine 1520–phenylalanine 2193 are Cytoplasmic-facing. Tyrosine 1529 is subject to O-(5'-phospho-RNA)-tyrosine. In terms of domain architecture, Peptidase C3 spans glycine 1549–phenylalanine 1727. Residues histidine 1588, glutamate 1619, and cysteine 1695 each act as for protease 3C activity in the active site. A RdRp catalytic domain is found at glycine 1958–leucine 2074. 2 residues coordinate Mg(2+): aspartate 1964 and aspartate 2060.

Belongs to the picornaviruses polyprotein family. As to quaternary structure, interacts with capsid protein VP1 and capsid protein VP3 to form heterotrimeric protomers. Interacts with capsid protein VP0, and capsid protein VP3 to form heterotrimeric protomers. Five protomers subsequently associate to form pentamers which serve as building blocks for the capsid. Interacts with capsid protein VP2, capsid protein VP3 and capsid protein VP4 following cleavage of capsid protein VP0. In terms of assembly, interacts with capsid protein VP1 and capsid protein VP3 in the mature capsid. Interacts with host CD55; this interaction promotes virus attachment to the host cell and subsequent internalization. As to quaternary structure, interacts with capsid protein VP0 and capsid protein VP1 to form heterotrimeric protomers. Five protomers subsequently associate to form pentamers which serve as building blocks for the capsid. Interacts with capsid protein VP4 in the mature capsid. Interacts with protein 2C; this interaction may be important for virion morphogenesis. Interacts with host CD55; this interaction promotes virus attachment to the host cell and subsequent internalization. Interacts with capsid protein VP1 and capsid protein VP3. In terms of assembly, homodimer. As to quaternary structure, homohexamer; forms a hexameric ring structure with 6-fold symmetry characteristic of AAA+ ATPases. Interacts (via N-terminus) with host RTN3 (via reticulon domain); this interaction is important for viral replication. Interacts with capsid protein VP3; this interaction may be important for virion morphogenesis. Interacts with protein 3CD. In terms of assembly, homodimer. Interacts with host GBF1. Interacts (via GOLD domain) with host ACBD3 (via GOLD domain); this interaction allows the formation of a viral protein 3A/ACBD3 heterotetramer with a 2:2 stoichiometry, which will stimulate the recruitment of host PI4KB in order to synthesize PI4P at the viral RNA replication sites. As to quaternary structure, interacts with RNA-directed RNA polymerase. Interacts with protein 3AB and with RNA-directed RNA polymerase. In terms of assembly, interacts with Viral protein genome-linked and with protein 3CD. Mg(2+) is required as a cofactor. In terms of processing, specific enzymatic cleavages in vivo by the viral proteases yield processing intermediates and the mature proteins. Myristoylation is required for the formation of pentamers during virus assembly. Further assembly of 12 pentamers and a molecule of genomic RNA generates the provirion. Post-translationally, during virion maturation, immature virions are rendered infectious following cleavage of VP0 into VP4 and VP2. This maturation seems to be an autocatalytic event triggered by the presence of RNA in the capsid and it is followed by a conformational change infectious virion. In terms of processing, myristoylation is required during RNA encapsidation and formation of the mature virus particle. VPg is uridylylated by the polymerase into VPg-pUpU. This acts as a nucleotide-peptide primer for the genomic RNA replication.

It is found in the virion. Its subcellular location is the host cytoplasm. The protein resides in the host cytoplasmic vesicle membrane. It localises to the host nucleus. The catalysed reaction is a ribonucleoside 5'-triphosphate + H2O = a ribonucleoside 5'-diphosphate + phosphate + H(+). It catalyses the reaction Selective cleavage of Tyr-|-Gly bond in the picornavirus polyprotein.. It carries out the reaction RNA(n) + a ribonucleoside 5'-triphosphate = RNA(n+1) + diphosphate. The enzyme catalyses Selective cleavage of Gln-|-Gly bond in the poliovirus polyprotein. In other picornavirus reactions Glu may be substituted for Gln, and Ser or Thr for Gly.. Its activity is regulated as follows. Replication or transcription is subject to high level of random mutations by the nucleotide analog ribavirin. Functionally, forms an icosahedral capsid of pseudo T=3 symmetry with capsid proteins VP2 and VP3. The capsid is 300 Angstroms in diameter, composed of 60 copies of each capsid protein and enclosing the viral positive strand RNA genome. Capsid protein VP1 mainly forms the vertices of the capsid. Capsid protein VP1 interacts with host cell receptor to provide virion attachment to target host cells. This attachment induces virion internalization. Tyrosine kinases are probably involved in the entry process. After binding to its receptor, the capsid undergoes conformational changes. Capsid protein VP1 N-terminus (that contains an amphipathic alpha-helix) and capsid protein VP4 are externalized. Together, they shape a pore in the host membrane through which viral genome is translocated to host cell cytoplasm. Forms an icosahedral capsid of pseudo T=3 symmetry with capsid proteins VP2 and VP3. The capsid is 300 Angstroms in diameter, composed of 60 copies of each capsid protein and enclosing the viral positive strand RNA genome. Its function is as follows. Lies on the inner surface of the capsid shell. After binding to the host receptor, the capsid undergoes conformational changes. Capsid protein VP4 is released, Capsid protein VP1 N-terminus is externalized, and together, they shape a pore in the host membrane through which the viral genome is translocated into the host cell cytoplasm. In terms of biological role, component of immature procapsids, which is cleaved into capsid proteins VP4 and VP2 after maturation. Allows the capsid to remain inactive before the maturation step. Functionally, cysteine protease that cleaves viral polyprotein and specific host proteins. It is responsible for the autocatalytic cleavage between the P1 and P2 regions, which is the first cleavage occurring in the polyprotein. Also cleaves the host translation initiation factor EIF4G1, in order to shut down the capped cellular mRNA translation. Inhibits the host nucleus-cytoplasm protein and RNA trafficking by cleaving host members of the nuclear pores. Counteracts stress granule formation probably by antagonizing its assembly or promoting its dissassembly. Plays an essential role in the virus replication cycle by acting as a viroporin. Creates a pore in the host endoplasmic reticulum and as a consequence releases Ca2+ in the cytoplasm of infected cell. In turn, high levels of cytoplasmic calcium may trigger membrane trafficking and transport of viral ER-associated proteins to viroplasms, sites of viral genome replication. Its function is as follows. Induces and associates with structural rearrangements of intracellular membranes. Displays RNA-binding, nucleotide binding and NTPase activities. May play a role in virion morphogenesis and viral RNA encapsidation by interacting with the capsid protein VP3. In terms of biological role, localizes the viral replication complex to the surface of membranous vesicles. Together with protein 3CD binds the Cis-Active RNA Element (CRE) which is involved in RNA synthesis initiation. Acts as a cofactor to stimulate the activity of 3D polymerase, maybe through a nucleid acid chaperone activity. Functionally, localizes the viral replication complex to the surface of membranous vesicles. It inhibits host cell endoplasmic reticulum-to-Golgi apparatus transport and causes the disassembly of the Golgi complex, possibly through GBF1 interaction. This would result in depletion of MHC, trail receptors and IFN receptors at the host cell surface. Plays an essential role in viral RNA replication by recruiting ACBD3 and PI4KB at the viral replication sites, thereby allowing the formation of the rearranged membranous structures where viral replication takes place. Acts as a primer for viral RNA replication and remains covalently bound to viral genomic RNA. VPg is uridylylated prior to priming replication into VPg-pUpU. The oriI viral genomic sequence may act as a template for this. The VPg-pUpU is then used as primer on the genomic RNA poly(A) by the RNA-dependent RNA polymerase to replicate the viral genome. During genome replication, the VPg-RNA linkage is removed by the host TDP2, thereby accelerating replication. During the late stage of the replication cycle, host TDP2 is excluded from sites of viral RNA synthesis and encapsidation, allowing for the generation of progeny virions. Its function is as follows. Involved in the viral replication complex and viral polypeptide maturation. It exhibits protease activity with a specificity and catalytic efficiency that is different from protease 3C. Protein 3CD lacks polymerase activity. Protein 3CD binds to the 5'UTR of the viral genome. In terms of biological role, replicates the viral genomic RNA on the surface of intracellular membranes. May form linear arrays of subunits that propagate along a strong head-to-tail interaction called interface-I. Covalently attaches UMP to a tyrosine of VPg, which is used to prime RNA synthesis. The positive stranded RNA genome is first replicated at virus induced membranous vesicles, creating a dsRNA genomic replication form. This dsRNA is then used as template to synthesize positive stranded RNA genomes. ss(+)RNA genomes are either translated, replicated or encapsidated. Functionally, major viral protease that mediates proteolytic processing of the polyprotein. Cleaves host EIF5B, contributing to host translation shutoff. Also cleaves host PABPC1, contributing to host translation shutoff. Cleaves host NLRP1, triggers host N-glycine-mediated degradation of the autoinhibitory NLRP1 N-terminal fragment. This Echovirus 12 (strain Travis) protein is Genome polyprotein.